The following is a 68-amino-acid chain: Conotoxin Ar5.3 (68 aa).

The signal sequence occupies residues 1-19; it reads MLCLPVFIILLLLASPAAS. The propeptide occupies 20 to 53; it reads NPLEKRIQNDLIRAALEDADMENDPRSIIDSVKT.

Belongs to the conotoxin T superfamily. Post-translationally, contains 2 disulfide bonds that can be either 'C1-C3, C2-C4' or 'C1-C4, C2-C3', since these disulfide connectivities have been observed for conotoxins with cysteine framework V (for examples, see AC P0DQQ7 and AC P81755). Expressed by the venom duct.

Its subcellular location is the secreted. The polypeptide is Conotoxin Ar5.3 (Conus arenatus (Sand-dusted cone)).